Here is a 300-residue protein sequence, read N- to C-terminus: Ribonuclease HIII (300 aa).

The region spanning 83-300 is the RNase H type-2 domain; the sequence is IPIIGSDEVG…THKAQALLTK (218 aa). A divalent metal cation-binding residues include Asp-89, Glu-90, and Asp-194.

It belongs to the RNase HII family. RnhC subfamily. Mn(2+) is required as a cofactor. Requires Mg(2+) as cofactor.

The protein localises to the cytoplasm. The catalysed reaction is Endonucleolytic cleavage to 5'-phosphomonoester.. In terms of biological role, endonuclease that specifically degrades the RNA of RNA-DNA hybrids. The polypeptide is Ribonuclease HIII (Streptococcus pyogenes serotype M12 (strain MGAS2096)).